The sequence spans 101 residues: Integration host factor subunit beta (101 aa).

Residues 62–84 form a disordered region; that stretch reads RNPKTGESVALPGKHVPHFKPGK.

The protein belongs to the bacterial histone-like protein family. As to quaternary structure, heterodimer of an alpha and a beta chain.

Its function is as follows. This protein is one of the two subunits of integration host factor, a specific DNA-binding protein that functions in genetic recombination as well as in transcriptional and translational control. This chain is Integration host factor subunit beta, found in Stenotrophomonas maltophilia (strain K279a).